Here is a 676-residue protein sequence, read N- to C-terminus: Kojibiose hydrolase (676 aa).

The N-terminal stretch at 1 to 20 (MNKGIIQLLALSLFCISVKA) is a signal peptide. Glutamate 469 functions as the Proton donor in the catalytic mechanism. Residue glutamate 613 is the Proton acceptor of the active site.

This sequence belongs to the glycosyl hydrolase 65 family.

The enzyme catalyses kojibiose + H2O = beta-D-glucose + D-glucose. Glycosidase that specifically hydrolyzes kojibiose to beta-glucose and glucose. Besides its activity on kojibiose, is also able to act on alpha-1,2-oligoglucans with a higher degree of polymerization. Shows weak activity on nigerose, but is not capable of breaking down trehalose, maltose, isomaltose, sucrose, isomaltulose, turanose or melezitose. The chain is Kojibiose hydrolase from Mucilaginibacter mallensis.